We begin with the raw amino-acid sequence, 588 residues long: Pescadillo homolog (588 aa).

In terms of domain architecture, BRCT spans 344 to 437 (PVSTLFSDFV…KLVPANLYLP (94 aa)). Disordered regions lie at residues 446–533 (SPWG…EAEE) and 559–588 (KKEE…EGKK). Positions 460-493 (DAEEEGEDDEDEDSEEGSGAEVEENVDEDEDDEE) are enriched in acidic residues. Basic and acidic residues-rich tracts occupy residues 510–519 (SDIKDTEVKS) and 576–588 (KTKE…EGKK). The stretch at 512-588 (IKDTEVKSKN…EKLTKLEGKK (77 aa)) forms a coiled coil.

The protein belongs to the pescadillo family. In terms of assembly, component of the NOP7 complex, composed of ERB1, NOP7 and YTM1. The complex is held together by ERB1, which interacts with NOP7 via its N-terminal domain and with YTM1 via a high-affinity interaction between the seven-bladed beta-propeller domains of the 2 proteins. The NOP7 complex associates with the 66S pre-ribosome.

It localises to the nucleus. The protein resides in the nucleolus. Its subcellular location is the nucleoplasm. Functionally, component of the NOP7 complex, which is required for maturation of the 25S and 5.8S ribosomal RNAs and formation of the 60S ribosome. The protein is Pescadillo homolog of Vanderwaltozyma polyspora (strain ATCC 22028 / DSM 70294 / BCRC 21397 / CBS 2163 / NBRC 10782 / NRRL Y-8283 / UCD 57-17) (Kluyveromyces polysporus).